Consider the following 409-residue polypeptide: Serine/threonine transporter SstT (409 aa).

9 helical membrane-spanning segments follow: residues 14 to 34, 57 to 77, 89 to 109, 149 to 169, 190 to 210, 224 to 244, 296 to 316, 338 to 358, and 365 to 385; these read GNLI…GFIA, GALK…SIII, IIIL…VVSF, AISS…GIAL, IVKF…ATSV, LLLV…AAIV, ISIP…IAVL, IIAA…LMLI, and FGIS…IGVV.

It belongs to the dicarboxylate/amino acid:cation symporter (DAACS) (TC 2.A.23) family.

It is found in the cell inner membrane. The catalysed reaction is L-serine(in) + Na(+)(in) = L-serine(out) + Na(+)(out). The enzyme catalyses L-threonine(in) + Na(+)(in) = L-threonine(out) + Na(+)(out). In terms of biological role, involved in the import of serine and threonine into the cell, with the concomitant import of sodium (symport system). The sequence is that of Serine/threonine transporter SstT from Campylobacter fetus subsp. fetus (strain 82-40).